A 232-amino-acid polypeptide reads, in one-letter code: Small ribosomal subunit protein uS2 (232 aa).

It belongs to the universal ribosomal protein uS2 family.

The sequence is that of Small ribosomal subunit protein uS2 from Alkaliphilus oremlandii (strain OhILAs) (Clostridium oremlandii (strain OhILAs)).